The sequence spans 427 residues: Protein phosphatase methylesterase 1 (427 aa).

The interval 1 to 49 (MSELQKSFAKAKLAKLPPEAPPFSMHPPRDEDDSESASSTGTVVPSPSR) is disordered. Positions 36–49 (SASSTGTVVPSPSR) are enriched in polar residues. Active-site residues include Ser-207, Asp-233, and His-364. Positions 402-427 (SAAMKQGAEAGAVPPFGRGQGSSHKP) are disordered.

This sequence belongs to the AB hydrolase superfamily.

It carries out the reaction [phosphatase 2A protein]-C-terminal L-leucine methyl ester + H2O = [phosphatase 2A protein]-C-terminal L-leucine + methanol + H(+). Demethylates proteins that have been reversibly carboxymethylated. Demethylates the phosphatase PP2A catalytic subunit. The sequence is that of Protein phosphatase methylesterase 1 (ppe1) from Aspergillus oryzae (strain ATCC 42149 / RIB 40) (Yellow koji mold).